Reading from the N-terminus, the 593-residue chain is Arginine--tRNA ligase (593 aa).

The short motif at 138–148 (ANPTGPLHVGH) is the 'HIGH' region element.

The protein belongs to the class-I aminoacyl-tRNA synthetase family. As to quaternary structure, monomer.

The protein resides in the cytoplasm. The enzyme catalyses tRNA(Arg) + L-arginine + ATP = L-arginyl-tRNA(Arg) + AMP + diphosphate. The protein is Arginine--tRNA ligase of Burkholderia vietnamiensis (strain G4 / LMG 22486) (Burkholderia cepacia (strain R1808)).